We begin with the raw amino-acid sequence, 101 residues long: UPF0134 protein MPN_675 (101 aa).

Belongs to the UPF0134 family.

The protein is UPF0134 protein MPN_675 of Mycoplasma pneumoniae (strain ATCC 29342 / M129 / Subtype 1) (Mycoplasmoides pneumoniae).